A 567-amino-acid polypeptide reads, in one-letter code: Maltase A2 (567 aa).

The N-terminal stretch at 1–23 is a signal peptide; that stretch reads MPKWAHLGLAALLLISTTQEGTA. Residues asparagine 30, asparagine 124, and asparagine 198 are each glycosylated (N-linked (GlcNAc...) asparagine). The Nucleophile role is filled by aspartate 226. Residue glutamate 298 is the Proton donor of the active site. Asparagine 312 carries N-linked (GlcNAc...) asparagine glycosylation.

The protein belongs to the glycosyl hydrolase 13 family.

The catalysed reaction is Hydrolysis of terminal, non-reducing (1-&gt;4)-linked alpha-D-glucose residues with release of alpha-D-glucose.. The polypeptide is Maltase A2 (Mal-A2) (Drosophila melanogaster (Fruit fly)).